Here is a 337-residue protein sequence, read N- to C-terminus: 2-oxoglutarate receptor 1 (337 aa).

Residues 1–38 (MIEPLDSPASDSDFLDYPSALGNCTDEQISFKMQYLPV) are Extracellular-facing. N-linked (GlcNAc...) asparagine glycosylation occurs at N23. A helical membrane pass occupies residues 39–59 (IYSIIFLVGFPGNTVAISIYI). The Cytoplasmic segment spans residues 60-69 (FKMRPWRGST). A helical transmembrane segment spans residues 70-90 (VIMLNLALTDLLYLTSLPFLI). The Extracellular portion of the chain corresponds to 91–116 (HYYASGENWIFGDFMCKFIRFGFHFN). Residues C106 and C183 are joined by a disulfide bond. The chain crosses the membrane as a helical span at residues 117 to 137 (LYSSILFLTCFSLFRYVVIIH). The Cytoplasmic portion of the chain corresponds to 138–151 (PMSCFSIQKTRWAV). The helical transmembrane segment at 152-172 (VACAGVWVISLVAVMPMTFLI) threads the bilayer. Over 173–200 (TSTTRTNRSACLDLTSSDDLTTIKWYNL) the chain is Extracellular. The helical transmembrane segment at 201-221 (ILTATTFCLPLVIVTLCYTTI) threads the bilayer. At 222-242 (ISTLTHGPRTHSCFKQKARRL) the chain is on the cytoplasmic side. The helical transmembrane segment at 243–263 (TILLLLVFYICFLPFHILRVI) threads the bilayer. The Extracellular portion of the chain corresponds to 264-284 (RIESRLLSISCSIESHIHEAY). The helical transmembrane segment at 285–305 (IVSRPLAALNTFGNLLLYVVV) threads the bilayer. The Cytoplasmic portion of the chain corresponds to 306–337 (SNNFQQAFCSIVRCKASGDLEQGKKDSCSNNP).

The protein belongs to the G-protein coupled receptor 1 family. Predominantly expressed in the kidney with limited expression in the testis and the smooth muscle. Expressed in SLC26A4/pendrin-positive type B and non-A non-B intercalated cells (at protein level).

Its subcellular location is the cell membrane. Functionally, g protein-coupled receptor for dicarboxylates and amino dicarboxylates. Receptor for itaconate produced by activated macrophages upon bacterial infection. In the respiratory epithelium, couples the binding of itaconate to the activation of GNA11 and downstream intracellular Ca(2+) release, leading to mucocilliary clearance of airborne pathogens. Receptor for leukotriene E4 (LTE4) produced by mast cells upon allergic inflammation. Binds with high affinity to LTE4 and elicits mucin release from pulmonary epithelium in response to airborne fungi allergens. Regulates mucin-producing goblet cell homeostasis. Receptor for alpha-ketoglutarate produced by proximal tubule renal cells upon metabolic alkalosis. In an intrarenal paracrine signaling pathway, binds alpha-ketoglutarate and drives transepithelial salt reabsorption and bicarbonate secretion by SLC26A4/pendrin-positive intercalated cells. The sequence is that of 2-oxoglutarate receptor 1 (Oxgr1) from Mus musculus (Mouse).